Reading from the N-terminus, the 349-residue chain is Probable transporter vicT (349 aa).

In terms of domain architecture, EamA spans 25–153 (IAAALLHALA…TALAGVVLVL (129 aa)). 9 consecutive transmembrane segments (helical) span residues 49-69 (PFTV…AYLW), 89-109 (AAGG…LSLS), 111-131 (ATVL…YWEG), 133-153 (TFAF…VLVL), 179-199 (LKGV…FSAM), 215-235 (FGVS…EVVW), 244-264 (LLAI…AGLG), 269-289 (RVTI…WAIW), and 294-314 (NVLT…PYLF).

It belongs to the TPT transporter family. SLC35D subfamily.

It localises to the membrane. Probable transporter; part of the gene cluster that mediates the biosynthesis of the secondary metabolite victorin, the molecular basis for Victoria blight of oats. This is Probable transporter vicT from Bipolaris victoriae (strain FI3) (Victoria blight of oats agent).